Consider the following 498-residue polypeptide: ATP synthase subunit beta, chloroplastic (498 aa).

Phosphothreonine is present on Thr-6. A Phosphoserine modification is found at Ser-13. 172-179 (GGAGVGKT) is an ATP binding site.

The protein belongs to the ATPase alpha/beta chains family. F-type ATPases have 2 components, CF(1) - the catalytic core - and CF(0) - the membrane proton channel. CF(1) has five subunits: alpha(3), beta(3), gamma(1), delta(1), epsilon(1). CF(0) has four main subunits: a(1), b(1), b'(1) and c(9-12).

The protein localises to the plastid. The protein resides in the chloroplast thylakoid membrane. It carries out the reaction ATP + H2O + 4 H(+)(in) = ADP + phosphate + 5 H(+)(out). Functionally, produces ATP from ADP in the presence of a proton gradient across the membrane. The catalytic sites are hosted primarily by the beta subunits. The protein is ATP synthase subunit beta, chloroplastic of Brassica napus (Rape).